The sequence spans 239 residues: Small ribosomal subunit protein uS3 (239 aa).

Residues 40–108 (RGLLEKELYS…VALNVQEVQN (69 aa)) form the KH type-2 domain. The tract at residues 212–239 (KPKARPELPKAEERPRRRRPAVRVKKEE) is disordered. A compositionally biased stretch (basic and acidic residues) spans 215-226 (ARPELPKAEERP). Basic residues predominate over residues 227 to 239 (RRRRPAVRVKKEE).

This sequence belongs to the universal ribosomal protein uS3 family. As to quaternary structure, part of the 30S ribosomal subunit. Forms a tight complex with proteins S10 and S14.

Functionally, binds the lower part of the 30S subunit head. Binds mRNA in the 70S ribosome, positioning it for translation. This chain is Small ribosomal subunit protein uS3 (rpsC), found in Thermus thermophilus (strain ATCC BAA-163 / DSM 7039 / HB27).